The following is an 887-amino-acid chain: Probable dual specificity protein kinase madd-3 (887 aa).

Disordered stretches follow at residues proline 77–alanine 147, alanine 163–leucine 299, leucine 313–glycine 333, threonine 347–alanine 475, and arginine 504–aspartate 533. Low complexity predominate over residues proline 108–proline 118. A compositionally biased stretch (basic and acidic residues) spans valine 121 to serine 130. The span at serine 177–glycine 192 shows a compositional bias: polar residues. Over residues serine 217–alanine 241 the composition is skewed to low complexity. Composition is skewed to polar residues over residues proline 314–glycine 332 and asparagine 356–glycine 366. Residues aspartate 367–leucine 377 are compositionally biased toward basic and acidic residues. Residues leucine 407–asparagine 419 show a composition bias toward low complexity. Polar residues predominate over residues phenylalanine 439–glutamate 462. The Protein kinase domain occupies phenylalanine 551 to phenylalanine 863. ATP contacts are provided by residues leucine 557 to valine 565 and lysine 580. Aspartate 677 serves as the catalytic Proton acceptor.

Belongs to the protein kinase superfamily. CMGC Ser/Thr protein kinase family. Lammer subfamily. In terms of tissue distribution, expressed in body wall, vulval and anal depressor muscles.

The protein resides in the cytoplasm. The protein localises to the nucleus. Functionally, probable dual specificity kinase acting on both serine/threonine and tyrosine-containing substrates. Negatively regulates p38 MAPK signaling to allow for the plasma membrane of body wall muscle cells to form projections, also called muscle arms, that extend and connect the body wall muscles to target motor neurons. Negative regulation of p38 MAPK signaling may in turn modulate the trafficking of the muscle specific receptor eva-1 to the lysosome, to ensure proper display of the eva-1 receptor on the plasma membrane of muscle cells and allow for muscle arm extension towards guidance cues. The sequence is that of Probable dual specificity protein kinase madd-3 from Caenorhabditis elegans.